Reading from the N-terminus, the 668-residue chain is Fructose-1,6-bisphosphatase class 3 (668 aa).

The protein belongs to the FBPase class 3 family. Mn(2+) serves as cofactor.

It catalyses the reaction beta-D-fructose 1,6-bisphosphate + H2O = beta-D-fructose 6-phosphate + phosphate. Its pathway is carbohydrate biosynthesis; gluconeogenesis. This is Fructose-1,6-bisphosphatase class 3 from Clostridium botulinum (strain Langeland / NCTC 10281 / Type F).